The following is a 307-amino-acid chain: Ribosomal RNA small subunit methyltransferase H (307 aa).

S-adenosyl-L-methionine contacts are provided by residues 31-33 (GGH), aspartate 51, tyrosine 83, aspartate 97, and glutamine 104.

The protein belongs to the methyltransferase superfamily. RsmH family.

Its subcellular location is the cytoplasm. It catalyses the reaction cytidine(1402) in 16S rRNA + S-adenosyl-L-methionine = N(4)-methylcytidine(1402) in 16S rRNA + S-adenosyl-L-homocysteine + H(+). Its function is as follows. Specifically methylates the N4 position of cytidine in position 1402 (C1402) of 16S rRNA. The chain is Ribosomal RNA small subunit methyltransferase H from Buchnera aphidicola subsp. Cinara cedri (strain Cc).